The following is a 358-amino-acid chain: 4-diphosphocytidyl-2-C-methyl-D-erythritol kinase (358 aa).

Residue K24 is part of the active site. 138–148 (PVAGGMAGGSA) contacts ATP. D186 is a catalytic residue.

This sequence belongs to the GHMP kinase family. IspE subfamily.

The enzyme catalyses 4-CDP-2-C-methyl-D-erythritol + ATP = 4-CDP-2-C-methyl-D-erythritol 2-phosphate + ADP + H(+). The protein operates within isoprenoid biosynthesis; isopentenyl diphosphate biosynthesis via DXP pathway; isopentenyl diphosphate from 1-deoxy-D-xylulose 5-phosphate: step 3/6. Its function is as follows. Catalyzes the phosphorylation of the position 2 hydroxy group of 4-diphosphocytidyl-2C-methyl-D-erythritol. The sequence is that of 4-diphosphocytidyl-2-C-methyl-D-erythritol kinase from Corynebacterium jeikeium (strain K411).